Consider the following 132-residue polypeptide: uncharacterized protein (132 aa).

Residues 1 to 68 (MCSAGELLRG…HTGEPVGDDY (68 aa)) are disordered. A helical membrane pass occupies residues 100 to 120 (VIVIFFWVMLWFLGLQALGLV).

Belongs to the FAM241 family.

The protein localises to the membrane. This is an uncharacterized protein from Homo sapiens (Human).